The chain runs to 540 residues: ADP,ATP carrier protein 2 (540 aa).

The next 12 helical transmembrane spans lie at 23–43, 61–81, 93–113, 150–170, 185–205, 222–242, 292–312, 334–354, 361–381, 389–409, 455–475, and 477–497; these read FSKF…YALL, VIPF…TMIY, VFIS…TVIY, LYYV…FWGV, ALIN…SLWL, EVLL…LYLY, LLGI…FEVV, ITTL…GQTI, IGAL…FGAI, MIFG…LGGV, SGGS…AASL, and AITI…AWLG.

The protein belongs to the ADP/ATP translocase tlc family.

Its subcellular location is the cell membrane. The protein is ADP,ATP carrier protein 2 (tlcB) of Chlamydia trachomatis serovar D (strain ATCC VR-885 / DSM 19411 / UW-3/Cx).